The primary structure comprises 346 residues: Selenide, water dikinase (346 aa).

The active site involves C15. Residues K18 and 46–48 each bind ATP; that span reads SKD. Position 49 (D49) interacts with Mg(2+). Residues D66, D89, and 137-139 each bind ATP; that span reads GHS. D89 is a binding site for Mg(2+). D225 lines the Mg(2+) pocket.

Belongs to the selenophosphate synthase 1 family. Class I subfamily. As to quaternary structure, homodimer. Mg(2+) is required as a cofactor.

It carries out the reaction hydrogenselenide + ATP + H2O = selenophosphate + AMP + phosphate + 2 H(+). Functionally, synthesizes selenophosphate from selenide and ATP. The sequence is that of Selenide, water dikinase from Photobacterium profundum (strain SS9).